The following is a 622-amino-acid chain: Chaperone protein HscA homolog (622 aa).

This sequence belongs to the heat shock protein 70 family.

Its function is as follows. Chaperone involved in the maturation of iron-sulfur cluster-containing proteins. Has a low intrinsic ATPase activity which is markedly stimulated by HscB. The polypeptide is Chaperone protein HscA homolog (Burkholderia cenocepacia (strain HI2424)).